Reading from the N-terminus, the 471-residue chain is RNA N(6)-adenosine-methyltransferase mettl16 (471 aa).

The tract at residues 17–20 is RNA-binding; that stretch reads PPDF. S-adenosyl-L-methionine-binding residues include Arg82, Gly106, Ser110, Glu129, Thr160, and Asn179. Positions 159–163 are K-loop; that stretch reads KTLLM. 3 RNA-binding regions span residues 194–206, 245–249, and 272–278; these read SRNS…SSIN, GKKCS, and QGRTMRW. VCR stretches follow at residues 284-390 and 421-470; these read FYDD…RAQE and FLFK…VAKP. The interval 375–412 is disordered; sequence RREQGRHLRELPRAQEPPSEETSVTEQQQQPDIPPESP.

The protein belongs to the methyltransferase superfamily. METTL16/RlmF family.

The protein resides in the nucleus. The protein localises to the cytoplasm. It carries out the reaction adenosine in U6 snRNA + S-adenosyl-L-methionine = N(6)-methyladenosine in U6 snRNA + S-adenosyl-L-homocysteine + H(+). It catalyses the reaction an adenosine in mRNA + S-adenosyl-L-methionine = an N(6)-methyladenosine in mRNA + S-adenosyl-L-homocysteine + H(+). Methyltransferase activity is autoinhibited by the K-loop region that blocks S-adenosyl-L-methionine-binding. Upon activation, K-loop changes conformation, allowing S-adenosyl-L-methionine-binding and subsequent methyltransferase activity. mRNA N6-adenosine-methyltransferase activity is inhibited by zinc. In terms of biological role, RNA N6-methyltransferase that methylates adenosine residues at the N(6) position of a subset of RNAs and is involved in S-adenosyl-L-methionine homeostasis by regulating expression of MAT2A transcripts. Able to N6-methylate a subset of mRNAs and U6 small nuclear RNAs (U6 snRNAs). In contrast to the METTL3-METTL14 heterodimer, only able to methylate a limited number of RNAs: requires both a 5'UACAGAGAA-3' nonamer sequence and a specific RNA structure. Plays a key role in S-adenosyl-L-methionine homeostasis by mediating N6-methylation of MAT2A mRNAs, altering splicing of MAT2A transcripts: in presence of S-adenosyl-L-methionine, binds the 3'-UTR region of MAT2A mRNA and specifically N6-methylates the first hairpin of MAT2A mRNA, impairing MAT2A splicing and protein expression. In S-adenosyl-L-methionine-limiting conditions, binds the 3'-UTR region of MAT2A mRNA but stalls due to the lack of a methyl donor, preventing N6-methylation and promoting expression of MAT2A. In addition to mRNAs, also able to mediate N6-methylation of U6 small nuclear RNA (U6 snRNA): specifically N6-methylates adenine in position 43 of U6 snRNAs. The chain is RNA N(6)-adenosine-methyltransferase mettl16 (mettl16) from Danio rerio (Zebrafish).